The chain runs to 289 residues: GTPase Era (289 aa).

Residues 2–167 (KSGFVSIIGR…LDEICKLLPE (166 aa)) enclose the Era-type G domain. The interval 10-17 (GRTNAGKS) is G1. 10-17 (GRTNAGKS) provides a ligand contact to GTP. Positions 36–40 (NATRR) are G2. Residues 57-60 (DTPG) are G3. GTP-binding positions include 57 to 61 (DTPGL) and 116 to 119 (TKVD). Residues 116–119 (TKVD) form a G4 region. The G5 stretch occupies residues 146 to 148 (FST). A KH type-2 domain is found at 194 to 274 (IYENLSDEIP…FLKLDVVVKK (81 aa)).

This sequence belongs to the TRAFAC class TrmE-Era-EngA-EngB-Septin-like GTPase superfamily. Era GTPase family. Monomer.

The protein resides in the cytoplasm. It is found in the cell inner membrane. Its function is as follows. An essential GTPase that binds both GDP and GTP, with rapid nucleotide exchange. Plays a role in 16S rRNA processing and 30S ribosomal subunit biogenesis and possibly also in cell cycle regulation and energy metabolism. The sequence is that of GTPase Era from Campylobacter concisus (strain 13826).